The sequence spans 551 residues: Calcium-dependent protein kinase 13 (551 aa).

G2 carries N-myristoyl glycine lipidation. Positions 15 to 78 (SFKQTASQRH…APADLGSVLG (64 aa)) are disordered. A Protein kinase domain is found at 88 to 346 (YAMGRKLGQG…AHEVLCHPWI (259 aa)). Residues 94-102 (LGQGQFGTT) and K117 contribute to the ATP site. D212 acts as the Proton acceptor in catalysis. The segment at 352 to 382 (APDRPLDPAVLSRIKQFSAMNKLKKMALRVI) is autoinhibitory domain. 4 consecutive EF-hand domains span residues 389–424 (EEIA…YGST), 425–460 (LKDT…LNKL), 461–496 (EREE…HNMP), and 497–530 (DAFL…GNMG). D402, D404, S406, E413, D438, D440, S442, T444, E449, D474, D476, S478, Y480, E485, D508, D510, D512, R514, and E519 together coordinate Ca(2+).

Belongs to the protein kinase superfamily. Ser/Thr protein kinase family. CDPK subfamily. Expressed in vascular tissues of crowns and roots, vascular bundles and central cylinder. Expressed in roots, leaf blades, spikelets and developing seeds.

Its subcellular location is the membrane. The enzyme catalyses L-seryl-[protein] + ATP = O-phospho-L-seryl-[protein] + ADP + H(+). The catalysed reaction is L-threonyl-[protein] + ATP = O-phospho-L-threonyl-[protein] + ADP + H(+). With respect to regulation, activated by calcium. Autophosphorylation may play an important role in the regulation of the kinase activity. May play a role in signal transduction pathways that involve calcium as a second messenger. May function in signal transduction pathways that positively regulate responses to cold, salt and drought stresses. The protein is Calcium-dependent protein kinase 13 of Oryza sativa subsp. japonica (Rice).